A 140-amino-acid chain; its full sequence is Large-conductance mechanosensitive channel (140 aa).

Transmembrane regions (helical) follow at residues 11–31 and 82–102; these read FAMRGNVVDMAVGIIIGGAFG and GNFIQVTLDFIIIAFAVFLLV.

It belongs to the MscL family. Homopentamer.

The protein resides in the cell inner membrane. Its function is as follows. Channel that opens in response to stretch forces in the membrane lipid bilayer. May participate in the regulation of osmotic pressure changes within the cell. In Parabacteroides distasonis (strain ATCC 8503 / DSM 20701 / CIP 104284 / JCM 5825 / NCTC 11152), this protein is Large-conductance mechanosensitive channel.